The following is a 224-amino-acid chain: Non-structural protein 3 (224 aa).

The CoV 3a-like viroporin TM domain maps to 34-124 (NVVPIRQASN…RYKNALFIIF (91 aa)). The next 3 membrane-spanning stretches (helical) occupy residues 40-60 (QASNVTGFLFTSVFVYFFALF), 69-88 (YIMLAARFAVVFLYCPLLYY), and 95-111 (ATIICCALIGRLCLVCF). In terms of domain architecture, CoV 3a-like viroporin CD spans 128–203 (TLSFLNGKAA…KLYVFSQHQI (76 aa)).

Its subcellular location is the host membrane. This chain is Non-structural protein 3, found in Sus scrofa (Pig).